We begin with the raw amino-acid sequence, 168 residues long: Peptide deformylase (168 aa).

Fe cation contacts are provided by Cys92 and His134. Residue Glu135 is part of the active site. His138 provides a ligand contact to Fe cation.

Belongs to the polypeptide deformylase family. Fe(2+) serves as cofactor.

The enzyme catalyses N-terminal N-formyl-L-methionyl-[peptide] + H2O = N-terminal L-methionyl-[peptide] + formate. In terms of biological role, removes the formyl group from the N-terminal Met of newly synthesized proteins. Requires at least a dipeptide for an efficient rate of reaction. N-terminal L-methionine is a prerequisite for activity but the enzyme has broad specificity at other positions. In Hahella chejuensis (strain KCTC 2396), this protein is Peptide deformylase.